The chain runs to 874 residues: MKSAEIREAFLRFFEEKGHTRVASSSLIPANDPTLLFTNAGMNQFKDCFLGLEKRAYTRATTSQKCVRAGGKHNDLENVGYTARHHTFFEMLGNFSFGDYFKRDAIHYAWEFLTGEKWLNLPKEKLWVTVYATDDEAYDIWTKEVGVPAERMVRIGDNKGAPYASDNFWAMGDTGPCGPCTEIFFDHGPEIWGGPPGSPEEDGDRYIEIWNNVFMQFNRTADGVMHPLPAPSVDTGMGLERVSAVLQHVHSNYEIDLFQNLLKASAEAIGCANDDAPSLKVVADHIRSCSFLIADGVLPSNEGRGYVLRRIIRRACRHGNKLGARGTFFHKIVAALVAEMGDAFPELKQQQAHIERVLKTEEEQFAKTLEQGLKILEQDLAELQGSVIPGNVVFKLYDTYGFPVDLTNDIARERELTIDEDGFEREMEAQRERARASSAFGMDYNSLVKVDGETRFLGYQGVSGAGQIVALFRDGQAVERLEEGEEGVVVLDQTPFYAESGGQVGDSGYLEAAGVRFDVRDTTKAGGAHLHHGVVARGNLSVGGAVKAEVDASVRQATALNHSATHLLHAALRQVLGDHVQQKGSLVDSQRLRFDFSHFEAIKAEQLKALEDIVNAEIRRNTEVETEETDIDTAKAKGAMALFGEKYGDQVRVLSMGGDFSVELCGGTHVSRTGDIGLFKITSEGGVAAGVRRIEAVTGAAALAYLNGAEEQLKEAASLVKGSRDNLLDKLGALLERNRSLEKELEQLKAKAASAAGDDLSAAAVEIKGAKVLAARLDGLDGKALLALVDQLKNKLGRAVILLGGELDGKVVLVAGVTQDLTGQLKAGELMKQAAAAVGGKGGGRPDMAQGGGTDAAKLDEALALAQRFVEQGL.

Zn(2+) is bound by residues His562, His566, Cys665, and His669.

It belongs to the class-II aminoacyl-tRNA synthetase family. Zn(2+) serves as cofactor.

It localises to the cytoplasm. The enzyme catalyses tRNA(Ala) + L-alanine + ATP = L-alanyl-tRNA(Ala) + AMP + diphosphate. Catalyzes the attachment of alanine to tRNA(Ala) in a two-step reaction: alanine is first activated by ATP to form Ala-AMP and then transferred to the acceptor end of tRNA(Ala). Also edits incorrectly charged Ser-tRNA(Ala) and Gly-tRNA(Ala) via its editing domain. The protein is Alanine--tRNA ligase of Pseudomonas aeruginosa (strain ATCC 15692 / DSM 22644 / CIP 104116 / JCM 14847 / LMG 12228 / 1C / PRS 101 / PAO1).